A 446-amino-acid chain; its full sequence is MNSQHIYDIVGIGVGPFNLGLACLTQPLNELSTIFFDSKDEFDWHSGIMPEGSTLQIPFIADLVSFADPKNNYSFLNYLKLHNRLYQFFIRESFFILRAEYNLYCKWAAEQLENVHFKSFVERIDYDESRQLYTVRVKQPQGEMKVVTKNLVLGTGTTPITPKFCQGYPEQIQSSADYLRHKKDYLTKKSITIVGGGQSGAEIYYDLLSEIDQHGYQLNWLTKAPHFFSMDLGKLTLEYTSPDYTSHFYSLDEDKRDQVIGSQNALYKGIELSFVNRIYDLLYQKSLHQPIPTRMMPNCALDAVEQQSNHLNLTFKNSDINKRFKLESEVLILALGYEYKIPECLTPIRTLINWDSKGRIALNWNYSINDDNTIFAQNIGIYSHGFTVPDLGMGCYRNAIIINTILGREVYPVEKRIAYQEFAPTTEEIVTPVKTTAKSHSTELSF.

FAD contacts are provided by F17, D37, S38, K39, W44, and H45. Positions 54, 56, and 98 each coordinate NADP(+). FAD is bound at residue Q56. V121 is an FAD binding site. NADP(+) is bound by residues S199, K223, Y267, and L301. FAD is bound by residues N378, P389, and L391.

It belongs to the lysine N(6)-hydroxylase/L-ornithine N(5)-oxygenase family. In terms of assembly, homotetramer. It depends on FAD as a cofactor.

The enzyme catalyses putrescine + NADPH + O2 = N-hydroxyputrescine + NADP(+) + H2O. The protein operates within siderophore biosynthesis. In terms of biological role, N-hydroxylating monooxygenase involved in the biosynthesis of fimsbactin A, the major siderophore produced by A.baumannii. Catalyzes the N-hydroxylation of the aliphatic diamine putrescine into N-hydroxyputrescine (NHP). Putrescine is the preferred substrate, but the enzyme can also catalyze the N-hydroxylation of cadaverine, with 4-fold lower catalytic efficiency. Cannot use lysine or ornithine as substrates. Uses both NADPH and NADH as the reducing cofactor with a preference for NADPH. The protein is Putrescine N-hydroxylase of Acinetobacter baumannii (strain ATCC 17978 / DSM 105126 / CIP 53.77 / LMG 1025 / NCDC KC755 / 5377).